A 142-amino-acid polypeptide reads, in one-letter code: Putative pre-16S rRNA nuclease (142 aa).

The protein belongs to the YqgF nuclease family.

Its subcellular location is the cytoplasm. In terms of biological role, could be a nuclease involved in processing of the 5'-end of pre-16S rRNA. This is Putative pre-16S rRNA nuclease from Staphylococcus aureus (strain bovine RF122 / ET3-1).